The chain runs to 1004 residues: Sodium/potassium-transporting ATPase subunit alpha-B (1004 aa).

2 helical membrane-spanning segments follow: residues 76-96 and 110-126; these read LFGG…LAYG and NLYL…VTGI. The tract at residues 197–216 is disordered; it reads SSLTGESEPQARSPEFTNDN. 2 helical membrane passes run 272–294 and 301–329; these read FIHI…AFVL and AVVF…TLTA. The active-site 4-aspartylphosphate intermediate is the Asp357. Residue Lys489 participates in ATP binding. 2 residues coordinate Mg(2+): Asp698 and Asp702. Helical transmembrane passes span 768–791, 828–855, 897–918, and 934–959; these read ISPF…ILCI, ERLI…VIMA, SSCH…LIIS, and ILNF…DKGL.

It belongs to the cation transport ATPase (P-type) (TC 3.A.3) family. Type IIC subfamily. The sodium/potassium-transporting ATPase is composed of a catalytic alpha subunit, an auxiliary non-catalytic beta subunit and an additional regulatory subunit.

The protein localises to the cell membrane. It carries out the reaction K(+)(out) + Na(+)(in) + ATP + H2O = K(+)(in) + Na(+)(out) + ADP + phosphate + H(+). In terms of biological role, this is the catalytic component of the active enzyme, which catalyzes the hydrolysis of ATP coupled with the exchange of sodium and potassium ions across the plasma membrane. This action creates the electrochemical gradient of sodium and potassium ions, providing the energy for active transport of various nutrients. The chain is Sodium/potassium-transporting ATPase subunit alpha-B from Artemia franciscana (Brine shrimp).